Reading from the N-terminus, the 330-residue chain is Beta-ketoacyl-[acyl-carrier-protein] synthase III 2 (330 aa).

Catalysis depends on residues C118 and H246. Residues Q247–R251 form an ACP-binding region. Residue N276 is part of the active site.

Belongs to the thiolase-like superfamily. FabH family. In terms of assembly, homodimer.

The protein resides in the cytoplasm. The catalysed reaction is malonyl-[ACP] + acetyl-CoA + H(+) = 3-oxobutanoyl-[ACP] + CO2 + CoA. Its pathway is lipid metabolism; fatty acid biosynthesis. In terms of biological role, catalyzes the condensation reaction of fatty acid synthesis by the addition to an acyl acceptor of two carbons from malonyl-ACP. Catalyzes the first condensation reaction which initiates fatty acid synthesis and may therefore play a role in governing the total rate of fatty acid production. Possesses both acetoacetyl-ACP synthase and acetyl transacylase activities. Its substrate specificity determines the biosynthesis of branched-chain and/or straight-chain of fatty acids. This chain is Beta-ketoacyl-[acyl-carrier-protein] synthase III 2, found in Streptomyces coelicolor (strain ATCC BAA-471 / A3(2) / M145).